The chain runs to 456 residues: Histidine--tRNA ligase (456 aa).

This sequence belongs to the class-II aminoacyl-tRNA synthetase family. In terms of assembly, homodimer.

Its subcellular location is the cytoplasm. It catalyses the reaction tRNA(His) + L-histidine + ATP = L-histidyl-tRNA(His) + AMP + diphosphate + H(+). This Borreliella burgdorferi (strain ATCC 35210 / DSM 4680 / CIP 102532 / B31) (Borrelia burgdorferi) protein is Histidine--tRNA ligase (hisS).